A 490-amino-acid chain; its full sequence is Acetyl-coenzyme A carboxylase carboxyl transferase subunit beta, chloroplastic (490 aa).

Positions 184–203 (LNSSENEGSSRRTRTKGSDL) are disordered. The CoA carboxyltransferase N-terminal domain maps to 221–490 (LWVQCENCYG…PLNQKSSKIK (270 aa)). Residues Cys-225, Cys-228, Cys-244, and Cys-247 each coordinate Zn(2+). The C4-type zinc finger occupies 225-247 (CENCYGLNYKKFLKSKMNICEQC).

This sequence belongs to the AccD/PCCB family. Acetyl-CoA carboxylase is a heterohexamer composed of biotin carboxyl carrier protein, biotin carboxylase and 2 subunits each of ACCase subunit alpha and ACCase plastid-coded subunit beta (accD). Requires Zn(2+) as cofactor. In terms of tissue distribution, RNA expressed in leaf, root, stem, and tuber; the least expression occurs in stems. RNA persists even in senescent leaves.

The protein localises to the plastid. The protein resides in the chloroplast stroma. The catalysed reaction is N(6)-carboxybiotinyl-L-lysyl-[protein] + acetyl-CoA = N(6)-biotinyl-L-lysyl-[protein] + malonyl-CoA. It participates in lipid metabolism; malonyl-CoA biosynthesis; malonyl-CoA from acetyl-CoA: step 1/1. Component of the acetyl coenzyme A carboxylase (ACC) complex. Biotin carboxylase (BC) catalyzes the carboxylation of biotin on its carrier protein (BCCP) and then the CO(2) group is transferred by the transcarboxylase to acetyl-CoA to form malonyl-CoA. This chain is Acetyl-coenzyme A carboxylase carboxyl transferase subunit beta, chloroplastic, found in Solanum tuberosum (Potato).